Here is a 156-residue protein sequence, read N- to C-terminus: Cyclin-dependent kinase inhibitor 2A (156 aa).

Position 1 is an N-acetylmethionine (methionine 1). Phosphoserine occurs at positions 7 and 8. 4 ANK repeats span residues 11–40, 44–72, 77–106, and 110–139; these read PSADWLATAAARGRVEEVRALLEAGALPNA, YGRRPIQVMMMGSARVAELLLLHGAEPNC, TLTRPVHDAAREGFLDTLVVLHRAGARLDV, and WGRLPVDLAEELGHRDVARYLRAAAGGTRG. 2 positions are modified to phosphoserine: serine 140 and serine 152.

Belongs to the CDKN2 cyclin-dependent kinase inhibitor family. In terms of assembly, heterodimer with CDK4 or CDK6. Predominant p16 complexes contained CDK6. Interacts with CDK4 (both 'T-172'-phosphorylated and non-phosphorylated forms); the interaction inhibits cyclin D-CDK4 kinase activity. Interacts with ISCO2. In terms of processing, phosphorylation seems to increase interaction with CDK4. In terms of tissue distribution, widely expressed but not detected in brain or skeletal muscle. Isoform 3 is pancreas-specific.

The protein resides in the cytoplasm. It is found in the nucleus. Its function is as follows. Acts as a negative regulator of the proliferation of normal cells by interacting strongly with CDK4 and CDK6. This inhibits their ability to interact with cyclins D and to phosphorylate the retinoblastoma protein. The polypeptide is Cyclin-dependent kinase inhibitor 2A (Homo sapiens (Human)).